Consider the following 214-residue polypeptide: Glutathione S-transferase F12 (214 aa).

Residues 2–82 form the GST N-terminal domain; it reads VVKLYGQVTA…YYATKFADQG (81 aa). Glutathione-binding positions include 11–12, 40–41, 53–54, and 66–67; these read AA, QK, QV, and ES. In terms of domain architecture, GST C-terminal spans 89 to 214; that stretch reads SLEHRAIVDQ…WKKLMVLAGH (126 aa).

Belongs to the GST superfamily. Phi family.

It localises to the cytoplasm. The protein localises to the cytosol. It carries out the reaction RX + glutathione = an S-substituted glutathione + a halide anion + H(+). Functionally, involved in the transport and/or accumulation of both anthocyanins and proanthocyanidins (PA)s in the vacuole. Functions in the cytosol to maintain the regular accumulation in the vacuole of PA precursors, such as epicatechin and glycosylated epicatechin. The sequence is that of Glutathione S-transferase F12 from Arabidopsis thaliana (Mouse-ear cress).